The primary structure comprises 256 residues: 3-hydroxy-5-phosphonooxypentane-2,4-dione thiolase (256 aa).

The active-site Schiff-base intermediate with substrate is the lysine 168.

Belongs to the DeoC/FbaB aldolase family. Homodecamer.

The protein localises to the cytoplasm. It carries out the reaction dihydroxyacetone phosphate + acetyl-CoA = 3-hydroxy-2,4-dioxopentyl phosphate + CoA. In terms of biological role, involved in the degradation of phospho-AI-2, thereby terminating induction of the lsr operon and closing the AI-2 signaling cycle. Catalyzes the transfer of an acetyl moiety from 3-hydroxy-5-phosphonooxypentane-2,4-dione to CoA to form glycerone phosphate and acetyl-CoA. This Shigella flexneri serotype 5b (strain 8401) protein is 3-hydroxy-5-phosphonooxypentane-2,4-dione thiolase (lsrF).